Reading from the N-terminus, the 320-residue chain is tRNA N6-adenosine threonylcarbamoyltransferase (320 aa).

Residues His-114 and His-118 each contribute to the Fe cation site. Residues 136–140, Asp-169, Gly-182, Asp-186, and Asn-273 each bind substrate; that span reads VVSGG. Asp-297 contributes to the Fe cation binding site.

The protein belongs to the KAE1 / TsaD family. It depends on Fe(2+) as a cofactor.

The protein resides in the cytoplasm. The catalysed reaction is L-threonylcarbamoyladenylate + adenosine(37) in tRNA = N(6)-L-threonylcarbamoyladenosine(37) in tRNA + AMP + H(+). Its function is as follows. Required for the formation of a threonylcarbamoyl group on adenosine at position 37 (t(6)A37) in tRNAs that read codons beginning with adenine. Is involved in the transfer of the threonylcarbamoyl moiety of threonylcarbamoyl-AMP (TC-AMP) to the N6 group of A37, together with TsaE and TsaB. TsaD likely plays a direct catalytic role in this reaction. The protein is tRNA N6-adenosine threonylcarbamoyltransferase of Ureaplasma parvum serovar 3 (strain ATCC 27815 / 27 / NCTC 11736).